A 218-amino-acid chain; its full sequence is Ribosomal RNA small subunit methyltransferase G (218 aa).

S-adenosyl-L-methionine contacts are provided by residues glycine 86, leucine 91, 137 to 138, and arginine 153; that span reads AE.

It belongs to the methyltransferase superfamily. RNA methyltransferase RsmG family.

It localises to the cytoplasm. It carries out the reaction guanosine(527) in 16S rRNA + S-adenosyl-L-methionine = N(7)-methylguanosine(527) in 16S rRNA + S-adenosyl-L-homocysteine. Functionally, specifically methylates the N7 position of guanine in position 527 of 16S rRNA. The sequence is that of Ribosomal RNA small subunit methyltransferase G from Nitratidesulfovibrio vulgaris (strain ATCC 29579 / DSM 644 / CCUG 34227 / NCIMB 8303 / VKM B-1760 / Hildenborough) (Desulfovibrio vulgaris).